We begin with the raw amino-acid sequence, 70 residues long: MKLGYSWKYGPFELLTIAAKNGWNSVIKNADLMHIPLPQYLANKEYQKIDKQKFNSHKDILQESQISIRE.

This is an uncharacterized protein from Rickettsia conorii (strain ATCC VR-613 / Malish 7).